The sequence spans 101 residues: Small ribosomal subunit protein uS14 (101 aa).

The protein belongs to the universal ribosomal protein uS14 family. In terms of assembly, part of the 30S ribosomal subunit. Contacts proteins S3 and S10.

Binds 16S rRNA, required for the assembly of 30S particles and may also be responsible for determining the conformation of the 16S rRNA at the A site. This is Small ribosomal subunit protein uS14 from Actinobacillus succinogenes (strain ATCC 55618 / DSM 22257 / CCUG 43843 / 130Z).